Reading from the N-terminus, the 132-residue chain is DNA-entry nuclease inhibitor (132 aa).

In terms of assembly, this protein is a subunit of a 75 kDa protein complex, which governs binding and entry of donor DNA. The complex is a tetramer of two subunits of the DNA-entry nuclease and two subunits of a competence-specific protein. Only the complex is able to bind ds- and ss-DNA.

It localises to the cell membrane. Plays a role in the competence of cells to be transformed. It inhibits the activity of the DNA-entry nuclease. This Bacillus subtilis (strain 168) protein is DNA-entry nuclease inhibitor (nin).